Here is a 567-residue protein sequence, read N- to C-terminus: MSMFCYQCQETAGCKGCTVKGVCGKDESVAKAQDLLIYVTKGLAVVSNEGMKVGVKDSKVNKYIVENLFTTITNANFDRDSILDRVRETLRIREDLKAKVVKAGGKVGEVKVSGGFFKKLFGIAKEEMVGPDAATWTADNVIEFDAKAEKVGVLSTENEDIRSLRELITYGLKGLSAYMKHAMNLKYDDETVHEFMAKALAATLDDSLSVDQLVALALEAGKFGVNGMALLDKANTETYGNPEITTVDIGVRKNPGILISGHDLRDLEMLLEQTEGTGVDVYTHGEMLAGQYYPKFKKYKNFAGNYGNAWWKQKEEFEKFNGPIVMTTNCIVIPKASYKNRLFTTGATGMPGCPHIEAKADGTKDFSEVIKMAKKCSAPTEIEKGQIVGGFAHNQVIALADKVVAAVKSGAIKRFFVMAGCDGRANSRNYYTEFAEKLPKDTVILTAGCAKYKYNKLNLGDIGGIPRVLDAGQCNDSYSLVVIALKLQEVFRLKSVNELPISYNIAWYEQKAVIVLLSLLHLGVKNIHLGPTLPAFLSPNVAKVLVDNFGIGGITNVEDDMKMFMQG.

[4Fe-4S] cluster is bound by residues Cys5, Cys8, Cys17, and Cys23. His262, Glu286, Cys330, Cys421, Cys449, Cys474, Glu509, and Lys511 together coordinate hybrid [4Fe-2O-2S] cluster. Cys421 carries the post-translational modification Cysteine persulfide.

It belongs to the HCP family. It depends on [4Fe-4S] cluster as a cofactor. The cofactor is hybrid [4Fe-2O-2S] cluster.

It is found in the cytoplasm. It catalyses the reaction A + NH4(+) + H2O = hydroxylamine + AH2 + H(+). Functionally, catalyzes the reduction of hydroxylamine to form NH(3) and H(2)O. In Clostridium acetobutylicum (strain ATCC 824 / DSM 792 / JCM 1419 / IAM 19013 / LMG 5710 / NBRC 13948 / NRRL B-527 / VKM B-1787 / 2291 / W), this protein is Hydroxylamine reductase 2.